We begin with the raw amino-acid sequence, 434 residues long: UPF0597 protein CLI_2075 (434 aa).

The protein belongs to the UPF0597 family.

This Clostridium botulinum (strain Langeland / NCTC 10281 / Type F) protein is UPF0597 protein CLI_2075.